The chain runs to 280 residues: MTEEKKENQKIVNLIIISDSVGDTAFNMVQAGAVQYPNVKFNYRRYPFITNREKLEKVFSEITEFENVLIAFTLIHEDEQLAVIKFAREHNMKYVDLLSGVIDNIHALTGEEPKHEIGAVHHMGQNYFDRISAMEFAVMYDDGKDPKGFLEADVVLLGVSRTSKTPLSLFLANKNLKVANLPLVPQTHIPDEIYKINPKKIIGLTNDPSVLNEIRRQRMIAYGLNPDTTYSNMDSINAELEAADKLYKKLGCYVINVAHRSIEETAALILEHLGIDDYAK.

158-165 (GVSRTSKT) serves as a coordination point for ADP.

It belongs to the pyruvate, phosphate/water dikinase regulatory protein family. PDRP subfamily.

The catalysed reaction is N(tele)-phospho-L-histidyl/L-threonyl-[pyruvate, phosphate dikinase] + ADP = N(tele)-phospho-L-histidyl/O-phospho-L-threonyl-[pyruvate, phosphate dikinase] + AMP + H(+). It carries out the reaction N(tele)-phospho-L-histidyl/O-phospho-L-threonyl-[pyruvate, phosphate dikinase] + phosphate + H(+) = N(tele)-phospho-L-histidyl/L-threonyl-[pyruvate, phosphate dikinase] + diphosphate. Its function is as follows. Bifunctional serine/threonine kinase and phosphorylase involved in the regulation of the pyruvate, phosphate dikinase (PPDK) by catalyzing its phosphorylation/dephosphorylation. The polypeptide is Putative pyruvate, phosphate dikinase regulatory protein (Lactobacillus johnsonii (strain CNCM I-12250 / La1 / NCC 533)).